Reading from the N-terminus, the 789-residue chain is METLLGGLLAFGMAFAVVDACPKYCVCQNLSESLGTLCPSKGLLFVPPDIDRRTVELRLGGNFIIHISRQDFANMTGLVDLTLSRNTISHIQPFSFLDLESLRSLHLDSNRLPSLGEDTLRGLVNLQHLIVNNNQLGGIADEAFEDFLLTLEDLDLSYNNLHGLPWDSVRRMVNLHQLSLDHNLLDHIAEGTFADLQKLARLDLTSNRLQKLPPDPIFARSQASALTATPFAPPLSFSFGGNPLHCNCELLWLRRLERDDDLETCGSPGGLKGRYFWHVREEEFVCEPPLITQHTHKLLVLEGQAATLKCKAIGDPSPLIHWVAPDDRLVGNSSRTAVYDNGTLDIFITTSQDSGAFTCIAANAAGEATAMVEVSIVQLPHLSNSTSRTAPPKSRLSDITGSSKTSRGGGGSGGGEPPKSPPERAVLVSEVTTTSALVKWSVSKSAPRVKMYQLQYNCSDDEVLIYRMIPASNKAFVVNNLVSGTGYDLCVLAMWDDTATTLTATNIVGCAQFFTKADYPQCQSMHSQILGGTMILVIGGIIVATLLVFIVILMVRYKVCNHEAPSKMAAAVSNVYSQTNGAQPPPPSSAPAGAPPQGPPKVVVRNELLDFTASLARASDSSSSSSLGSGEAAGLGRAPWRIPPSAPRPKPSLDRLMGAFASLDLKSQRKEELLDSRTPAGRGAGTSARGHHSDREPLLGPPAARARSLLPLPLEGKAKRSHSFDMGDFAAAAAGGVVPGGYSPPRKVSNIWTKRSLSVNGMLLPFEESDLVGARGTFGSSEWVMESTV.

Residues 1–20 (METLLGGLLAFGMAFAVVDA) form the signal peptide. An LRRNT domain is found at 21–52 (CPKYCVCQNLSESLGTLCPSKGLLFVPPDIDR). Residues 21 to 534 (CPKYCVCQNL…MHSQILGGTM (514 aa)) are Extracellular-facing. N-linked (GlcNAc...) asparagine glycosylation is present at N29. LRR repeat units lie at residues 53–74 (RTVELRLGGNFIIHISRQDFAN), 77–98 (GLVDLTLSRNTISHIQPFSFLD), 101–122 (SLRSLHLDSNRLPSLGEDTLRG), 125–146 (NLQHLIVNNNQLGGIADEAFED), 150–171 (TLEDLDLSYNNLHGLPWDSVRR), 174–195 (NLHQLSLDHNLLDHIAEGTFAD), and 198–219 (KLARLDLTSNRLQKLPPDPIFA). The LRRCT domain occupies 242–288 (NPLHCNCELLWLRRLERDDDLETCGSPGGLKGRYFWHVREEEFVCEP). The Ig-like domain maps to 289-375 (PLITQHTHKL…GEATAMVEVS (87 aa)). C310 and C359 are disulfide-bonded. Residues N332, N341, and N384 are each glycosylated (N-linked (GlcNAc...) asparagine). A disordered region spans residues 383-424 (SNSTSRTAPPKSRLSDITGSSKTSRGGGGSGGGEPPKSPPER). Residues 407-416 (RGGGGSGGGE) show a composition bias toward gly residues. The Fibronectin type-III domain occupies 421-518 (PPERAVLVSE…GCAQFFTKAD (98 aa)). Residues 535–555 (ILVIGGIIVATLLVFIVILMV) form a helical membrane-spanning segment. Topologically, residues 556–789 (RYKVCNHEAP…SSEWVMESTV (234 aa)) are cytoplasmic. Disordered regions lie at residues 577–602 (SQTNGAQPPPPSSAPAGAPPQGPPKV), 619–654 (SDSSSSSSLGSGEAAGLGRAPWRIPPSAPRPKPSLD), and 668–702 (QRKEELLDSRTPAGRGAGTSARGHHSDREPLLGPP). The span at 583–599 (QPPPPSSAPAGAPPQGP) shows a compositional bias: pro residues. The span at 619-638 (SDSSSSSSLGSGEAAGLGRA) shows a compositional bias: low complexity. Residues 641–650 (RIPPSAPRPK) show a composition bias toward pro residues. Residues 786-789 (ESTV) carry the PDZ-binding motif.

This sequence belongs to the LRFN family. Forms heteromeric complexes with LRFN1, LRFN3, LRFN4 and LRFN5. Can form homomeric complexes, but not across cell junctions. Directly interacts with 2 NMDA receptor subunits GRIN1 and GRIN2A. Interacts with DLG1, DLG2, DLG3 and DLG4. Post-translationally, glycosylated.

It is found in the membrane. Its subcellular location is the synapse. It localises to the postsynaptic cell membrane. In terms of biological role, promotes neurite outgrowth in hippocampal neurons. Enhances the cell surface expression of 2 NMDA receptor subunits GRIN1 and GRIN2A. May play a role in redistributing DLG4 to the cell periphery. This Homo sapiens (Human) protein is Leucine-rich repeat and fibronectin type-III domain-containing protein 2 (LRFN2).